The chain runs to 535 residues: CTP synthase (535 aa).

Residues 1–266 (MKFVVITGGV…GDYICERLGL (266 aa)) form an amidoligase domain region. Serine 12 contributes to the CTP binding site. Serine 12 serves as a coordination point for UTP. ATP contacts are provided by residues 13 to 18 (GIGKGI) and aspartate 70. Positions 70 and 140 each coordinate Mg(2+). CTP is bound by residues 147–149 (DIE), 187–192 (KTKPTQ), and lysine 223. UTP-binding positions include 187-192 (KTKPTQ) and lysine 223. Residues 291–535 (RIAVVGKYVD…IKAAAGQGPD (245 aa)) enclose the Glutamine amidotransferase type-1 domain. Glycine 355 contacts L-glutamine. Cysteine 382 acts as the Nucleophile; for glutamine hydrolysis in catalysis. L-glutamine is bound by residues 383–386 (LGFQ), glutamate 406, and arginine 464. Residues histidine 508 and glutamate 510 contribute to the active site.

Belongs to the CTP synthase family. In terms of assembly, homotetramer.

The catalysed reaction is UTP + L-glutamine + ATP + H2O = CTP + L-glutamate + ADP + phosphate + 2 H(+). The enzyme catalyses L-glutamine + H2O = L-glutamate + NH4(+). It carries out the reaction UTP + NH4(+) + ATP = CTP + ADP + phosphate + 2 H(+). Its pathway is pyrimidine metabolism; CTP biosynthesis via de novo pathway; CTP from UDP: step 2/2. Its activity is regulated as follows. Allosterically activated by GTP, when glutamine is the substrate; GTP has no effect on the reaction when ammonia is the substrate. The allosteric effector GTP functions by stabilizing the protein conformation that binds the tetrahedral intermediate(s) formed during glutamine hydrolysis. Inhibited by the product CTP, via allosteric rather than competitive inhibition. Functionally, catalyzes the ATP-dependent amination of UTP to CTP with either L-glutamine or ammonia as the source of nitrogen. Regulates intracellular CTP levels through interactions with the four ribonucleotide triphosphates. This Methanopyrus kandleri (strain AV19 / DSM 6324 / JCM 9639 / NBRC 100938) protein is CTP synthase.